We begin with the raw amino-acid sequence, 478 residues long: Putative multidrug resistance outer membrane protein MdtQ (478 aa).

Residues 1 to 21 (MNRDSFYPAIACFPLLLMLAG) form the signal peptide. A lipid anchor (N-palmitoyl cysteine) is attached at cysteine 22. A lipid anchor (S-diacylglycerol cysteine) is attached at cysteine 22.

The protein belongs to the outer membrane factor (OMF) (TC 1.B.17) family.

The protein resides in the cell outer membrane. Could be involved in resistance to puromycin, acriflavine and tetraphenylarsonium chloride. The protein is Putative multidrug resistance outer membrane protein MdtQ (mdtQ) of Escherichia coli (strain K12).